Consider the following 940-residue polypeptide: Lon protease homolog 1, mitochondrial (940 aa).

The transit peptide at 1–61 (MLKLFTSSAS…AFFCSEPTNG (61 aa)) directs the protein to the mitochondrion. The segment at 70–90 (KAVESDSEVSDSKSSSAIVPT) is disordered. Residue serine 74 is modified to Phosphoserine. In terms of domain architecture, Lon N-terminal spans 100 to 309 (VLALPVPHRP…LTLELMKKEM (210 aa)). An ATP-binding site is contributed by 464–471 (GPPGVGKT). The Lon proteolytic domain maps to 751–935 (QTPVGVVMGL…GKIFELAFGY (185 aa)). Catalysis depends on residues serine 841 and lysine 884.

Belongs to the peptidase S16 family. As to quaternary structure, homohexamer or homoheptamer. Organized in a ring with a central cavity.

It localises to the mitochondrion matrix. It carries out the reaction Hydrolysis of proteins in presence of ATP.. Its function is as follows. ATP-dependent serine protease that mediates the selective degradation of misfolded, unassembled or oxidatively damaged polypeptides as well as certain short-lived regulatory proteins in the mitochondrial matrix. May also have a chaperone function in the assembly of inner membrane protein complexes. Participates in the regulation of mitochondrial gene expression and in the maintenance of the integrity of the mitochondrial genome. Binds to mitochondrial DNA in a site-specific manner. This Arabidopsis thaliana (Mouse-ear cress) protein is Lon protease homolog 1, mitochondrial (LON1).